The sequence spans 451 residues: Phenylalanine-4-hydroxylase (451 aa).

A Phosphoserine; by PKA modification is found at S16. One can recognise an ACT domain in the interval 35–113; the sequence is SLIFSLKEEV…TVHELSRDKK (79 aa). Fe cation is bound by residues H284, H289, and E329.

This sequence belongs to the biopterin-dependent aromatic amino acid hydroxylase family. In terms of assembly, homodimer and homotetramer. Fe(2+) is required as a cofactor. Post-translationally, phosphorylation at Ser-16 increases basal activity and facilitates activation by the substrate phenylalanine.

The catalysed reaction is (6R)-L-erythro-5,6,7,8-tetrahydrobiopterin + L-phenylalanine + O2 = (4aS,6R)-4a-hydroxy-L-erythro-5,6,7,8-tetrahydrobiopterin + L-tyrosine. It functions in the pathway amino-acid degradation; L-phenylalanine degradation; acetoacetate and fumarate from L-phenylalanine: step 1/6. With respect to regulation, N-terminal region of PAH is thought to contain allosteric binding sites for phenylalanine and to constitute an 'inhibitory' domain that regulates the activity of a catalytic domain in the C-terminal portion of the molecule. Its function is as follows. Catalyzes the hydroxylation of L-phenylalanine to L-tyrosine. This chain is Phenylalanine-4-hydroxylase (PAH), found in Bos taurus (Bovine).